The sequence spans 2430 residues: Protein TASOR 2 (2430 aa).

Phosphoserine is present on residues Ser-19, Ser-219, and Ser-384. Disordered stretches follow at residues 416–488 and 577–648; these read LDRK…GETA and RGTS…SQSS. Ser-685 is subject to Phosphoserine. Positions 704-727 are disordered; sequence LLLQQKPPDDPVVKPKDRPPSARV. Basic and acidic residues predominate over residues 710 to 723; it reads PPDDPVVKPKDRPP. 3 positions are modified to phosphoserine: Ser-1025, Ser-1087, and Ser-1172. The segment at 1331–1360 is disordered; the sequence is LTESREVSSADNVSVYPSVSEEPVENKERK. A Phosphoserine modification is found at Ser-1541. The interval 1700–1727 is disordered; it reads EAELHKETTGPGTAGPQSNTTSSLKGER. The segment covering 1714 to 1723 has biased composition (polar residues); sequence GPQSNTTSSL. At Ser-1848 the chain carries Phosphoserine. Lys-2007 participates in a covalent cross-link: Glycyl lysine isopeptide (Lys-Gly) (interchain with G-Cter in SUMO2). 4 positions are modified to phosphoserine: Ser-2009, Ser-2037, Ser-2062, and Ser-2066. The segment at 2046-2069 is disordered; that stretch reads SDPRPQGQPRRGYTASSLDSSSSW.

Belongs to the TASOR family.

The protein is Protein TASOR 2 of Homo sapiens (Human).